The chain runs to 279 residues: 3-methyl-2-oxobutanoate hydroxymethyltransferase (279 aa).

Mg(2+)-binding residues include aspartate 43 and aspartate 82. 3-methyl-2-oxobutanoate is bound by residues 43–44 (DS), aspartate 82, and lysine 112. Glutamate 114 contributes to the Mg(2+) binding site. The Proton acceptor role is filled by glutamate 181.

This sequence belongs to the PanB family. In terms of assembly, homodecamer; pentamer of dimers. Mg(2+) serves as cofactor.

It localises to the cytoplasm. It catalyses the reaction 3-methyl-2-oxobutanoate + (6R)-5,10-methylene-5,6,7,8-tetrahydrofolate + H2O = 2-dehydropantoate + (6S)-5,6,7,8-tetrahydrofolate. It participates in cofactor biosynthesis; (R)-pantothenate biosynthesis; (R)-pantoate from 3-methyl-2-oxobutanoate: step 1/2. Its function is as follows. Catalyzes the reversible reaction in which hydroxymethyl group from 5,10-methylenetetrahydrofolate is transferred onto alpha-ketoisovalerate to form ketopantoate. In Geobacillus kaustophilus (strain HTA426), this protein is 3-methyl-2-oxobutanoate hydroxymethyltransferase.